The primary structure comprises 150 residues: Large ribosomal subunit protein bL9 (150 aa).

Belongs to the bacterial ribosomal protein bL9 family.

In terms of biological role, binds to the 23S rRNA. In Hamiltonella defensa subsp. Acyrthosiphon pisum (strain 5AT), this protein is Large ribosomal subunit protein bL9.